We begin with the raw amino-acid sequence, 546 residues long: Probable T-complex protein 1 subunit theta (546 aa).

The tract at residues 527 to 546 (MSKPAGGPKPPGPNPHWDDD) is disordered.

Belongs to the TCP-1 chaperonin family. In terms of assembly, heterooligomeric complex of about 850 to 900 kDa that forms two stacked rings, 12 to 16 nm in diameter.

It localises to the cytoplasm. Its function is as follows. Molecular chaperone; assists the folding of proteins upon ATP hydrolysis. Known to play a role, in vitro, in the folding of actin and tubulin. In Schizosaccharomyces pombe (strain 972 / ATCC 24843) (Fission yeast), this protein is Probable T-complex protein 1 subunit theta (cct8).